Reading from the N-terminus, the 87-residue chain is Small ribosomal subunit protein bS20 (87 aa).

Positions M1 to A11 are enriched in basic residues. The interval M1–M27 is disordered.

It belongs to the bacterial ribosomal protein bS20 family.

Functionally, binds directly to 16S ribosomal RNA. The sequence is that of Small ribosomal subunit protein bS20 from Haemophilus influenzae (strain PittEE).